Consider the following 277-residue polypeptide: Large ribosomal subunit protein mL46 (277 aa).

Lys-217 carries the post-translational modification N6-succinyllysine. Position 228 is an N6-acetyllysine (Lys-228). An N6-succinyllysine modification is found at Lys-246.

The protein belongs to the mitochondrion-specific ribosomal protein mL46 family. As to quaternary structure, component of the mitochondrial ribosome large subunit (39S) which comprises a 16S rRNA and about 50 distinct proteins.

It is found in the mitochondrion. The polypeptide is Large ribosomal subunit protein mL46 (Mrpl46) (Rattus norvegicus (Rat)).